The sequence spans 692 residues: Elongation factor G 2 (692 aa).

A tr-type G domain is found at Glu8–Leu283. Residues Ala17–Thr24, Asp81–His85, and Asn135–Asp138 contribute to the GTP site.

It belongs to the TRAFAC class translation factor GTPase superfamily. Classic translation factor GTPase family. EF-G/EF-2 subfamily.

The protein localises to the cytoplasm. Functionally, catalyzes the GTP-dependent ribosomal translocation step during translation elongation. During this step, the ribosome changes from the pre-translocational (PRE) to the post-translocational (POST) state as the newly formed A-site-bound peptidyl-tRNA and P-site-bound deacylated tRNA move to the P and E sites, respectively. Catalyzes the coordinated movement of the two tRNA molecules, the mRNA and conformational changes in the ribosome. The protein is Elongation factor G 2 of Geobacter sulfurreducens (strain ATCC 51573 / DSM 12127 / PCA).